Reading from the N-terminus, the 61-residue chain is Small ribosomal subunit protein uS14 (61 aa).

Residues Cys-24, Cys-27, Cys-40, and Cys-43 each contribute to the Zn(2+) site.

Belongs to the universal ribosomal protein uS14 family. Zinc-binding uS14 subfamily. Part of the 30S ribosomal subunit. Contacts proteins S3 and S10. It depends on Zn(2+) as a cofactor.

Binds 16S rRNA, required for the assembly of 30S particles and may also be responsible for determining the conformation of the 16S rRNA at the A site. The sequence is that of Small ribosomal subunit protein uS14 from Bifidobacterium adolescentis (strain ATCC 15703 / DSM 20083 / NCTC 11814 / E194a).